Consider the following 445-residue polypeptide: StAR-related lipid transfer protein 3 (445 aa).

The Cytoplasmic segment spans residues 1 to 51 (MSKLPRELTRDLERSLPAVASLGSSLSHSQSLSSHLLPPPEKRRAISDVRR). Residues 46 to 217 (ISDVRRTFCL…YSPPESFAGS (172 aa)) enclose the MENTAL domain. A helical membrane pass occupies residues 52 to 72 (TFCLFVTFDLLFISLLWIIEL). The Extracellular portion of the chain corresponds to 73–94 (NTNTGIRKNLEQEIIQYNFKTS). The helical transmembrane segment at 95–115 (FFDIFVLAFFRFSGLLLGYAV) threads the bilayer. Residues 116–120 (LRLRH) lie on the Cytoplasmic side of the membrane. A helical transmembrane segment spans residues 121–141 (WWVIAVTTLVSSAFLIVKVIL). Topologically, residues 142 to 148 (SELLSKG) are extracellular. A helical membrane pass occupies residues 149 to 169 (AFGYLLPIVSFVLAWLETWFL). The Cytoplasmic portion of the chain corresponds to 170 to 445 (DFKVLPQEAE…QRISELGARA (276 aa)). Residues 206–212 (QFYSPPE) carry the FFAT motif. Ser-209 is modified (phosphoserine). Positions 230–443 (SFSAQEREYI…LRQRISELGA (214 aa)) constitute an START domain.

The protein belongs to the STARD3 family. In terms of assembly, homodimer. Interacts (via the MENTAL domain) with STARD3NL. Interacts (via phosphorylated FFAT motif) with VAPA (via MSP domain). Interacts (via phosphorylated FFAT motif) with VAPB (via MSP domain). Interacts (via phosphorylated FFAT motif) with MOSPD2 (via MSP domain); this interaction allows enrichment of MOSPD2 around endosomes. Post-translationally, phosphorylation at Ser-209 is necessary and sufficient for the direct interaction of the phosphorylated FFAT motif with the MSP domain of MOSPD2, VAPA and VAPB and allows the tethering of two membranes that participates in the formation of ER-endosome contacts. Phosphorylation of the FFAT motif leads to conformation changes. Additional phosphorylations around the core FFAT motif (QFYSPPE) are not essential but strengthen the interaction with MOSPD2, VAPA and VAPB. Phosphorylation at Ser-209 of FFAT motif drives membrane tethering between the endoplasmic reticulum and late endosomes via interaction with VAPA and VAPB that in turn allows the efficient transport of sterol mediated by the START domain. Expressed in retina.

The protein localises to the late endosome membrane. The enzyme catalyses cholesterol(in) = cholesterol(out). In terms of biological role, sterol-binding protein that mediates cholesterol transport from the endoplasmic reticulum to endosomes. The sterol transport mechanism is triggered by phosphorylation of FFAT motif that leads to membrane tethering between the endoplasmic reticulum and late endosomes via interaction with VAPA and VAPB. Acts as a lipid transfer protein that redirects sterol to the endosome at the expense of the cell membrane and favors membrane formation inside endosomes. May also mediate cholesterol transport between other membranes, such as mitochondria membrane or cell membrane. However, such results need additional experimental evidences; probably mainly mediates cholesterol transport from the endoplasmic reticulum to endosomes. Does not activate transcriptional cholesterol sensing. Able to bind other lipids, such as lutein, a xanthophyll carotenoids that form the macular pigment of the retina. The sequence is that of StAR-related lipid transfer protein 3 from Homo sapiens (Human).